Here is a 429-residue protein sequence, read N- to C-terminus: G2/mitotic-specific cyclin-B1 (429 aa).

Over residues 1 to 14 the composition is skewed to polar residues; it reads MALRVTRNTKLNTE. 2 disordered regions span residues 1–21 and 71–128; these read MALR…KVSM and TGKV…PMET. K73 carries the post-translational modification N6-acetyllysine. Residues 92–106 show a composition bias toward acidic residues; it reads PEVELAEPEPEPEPV. At S122 the chain carries Phosphoserine; by CDK1. S124 is modified (phosphoserine). S129 bears the Phosphoserine; by PLK1 mark. Phosphoserine is present on S143. Interaction with CDK2 stretches follow at residues 165–173 and 254–257; these read EYVKDIYAY and YEEM. Residue T317 is modified to Phosphothreonine.

This sequence belongs to the cyclin family. Cyclin AB subfamily. Interacts with the CDC2 protein kinase to form a serine/threonine kinase holoenzyme complex also known as maturation promoting factor (MPF). The cyclin subunit imparts substrate specificity to the complex. Binds HEI10. Interacts with catalytically active RALBP1 and CDC2 during mitosis to form an endocytotic complex during interphase. Interacts with CCNF; interaction is required for nuclear localization. Interacts with CDK5RAP3. Interacts with RFPL4A and UBE2A. Interacts with INCA1. Post-translationally, ubiquitinated by the SCF(NIPA) complex during interphase, leading to its destruction. Not ubiquitinated during G2/M phases. Phosphorylated by PLK1 at Ser-129 on centrosomes during prophase: phosphorylation by PLK1 does not cause nuclear import. Phosphorylation at Ser-143 was also reported to be mediated by PLK1 but Ser-129 seems to be the primary phosphorylation site.

The protein resides in the cytoplasm. It is found in the nucleus. Its subcellular location is the cytoskeleton. It localises to the microtubule organizing center. The protein localises to the centrosome. Essential for the control of the cell cycle at the G2/M (mitosis) transition. The polypeptide is G2/mitotic-specific cyclin-B1 (CCNB1) (Cricetulus griseus (Chinese hamster)).